A 78-amino-acid chain; its full sequence is MEDIIVLFNRVTEKLEKELAIRIFVLAHQLERDKAIRLLQGLFWRYRFKKPRVDYCLCWWCCKFYYWQLQSTLSITTA.

The Nuclear export signal motif lies at 35–43 (AIRLLQGLF). Positions 45–54 (RYRFKKPRVD) match the Nuclear localization signal motif.

Its subcellular location is the virion. The protein resides in the host nucleus. Functionally, seems to function as a Vpr-like protein, since it mediates host cell cycle arrest in G2 phase. Cell cycle arrest creates a favorable environment for maximizing viral expression and production. The protein is Probable Vpr-like protein of Feline immunodeficiency virus (isolate Petaluma) (FIV).